An 837-amino-acid chain; its full sequence is Phosphatidylinositol-glycan-specific phospholipase D (837 aa).

A signal peptide spans 1 to 23 (MSAGRLWSSLLLLLPLFCSKSSS). N-linked (GlcNAc...) asparagine glycosylation is found at Asn94, Asn267, Asn287, Asn303, and Asn317. FG-GAP repeat units follow at residues 364–425 (SPSA…GLPP), 431–492 (NKEG…GRLS), 494–554 (SPNV…RNDK), 561–619 (EADW…SLGK), 629–689 (QSTI…GATR), 701–767 (ALLS…TLGD), and 785–837 (QYVL…FSSD). N-linked (GlcNAc...) asparagine glycans are attached at residues Asn477, Asn496, Asn586, Asn599, and Asn655.

Belongs to the GPLD1 family. Monomer. In terms of tissue distribution, widely expressed.

The protein resides in the secreted. It catalyses the reaction a 6-(alpha-D-glucosaminyl)-1-(1,2-diacyl-sn-glycero-3-phospho)-1D-myo-inositol + H2O = 6-(alpha-D-glucosaminyl)-1D-myo-inositol + a 1,2-diacyl-sn-glycero-3-phosphate + H(+). This protein hydrolyzes the inositol phosphate linkage in proteins anchored by phosphatidylinositol glycans (GPI-anchor) thus releasing these proteins from the membrane. This Mus musculus (Mouse) protein is Phosphatidylinositol-glycan-specific phospholipase D (Gpld1).